The primary structure comprises 309 residues: Ferrochelatase (309 aa).

Fe cation contacts are provided by His-185 and Glu-262.

This sequence belongs to the ferrochelatase family.

It localises to the cytoplasm. The enzyme catalyses heme b + 2 H(+) = protoporphyrin IX + Fe(2+). It participates in porphyrin-containing compound metabolism; protoheme biosynthesis; protoheme from protoporphyrin-IX: step 1/1. Functionally, catalyzes the ferrous insertion into protoporphyrin IX. This Campylobacter jejuni subsp. jejuni serotype O:6 (strain 81116 / NCTC 11828) protein is Ferrochelatase.